The primary structure comprises 88 residues: Acyl-CoA-binding protein homolog (88 aa).

The 86-residue stretch at 3–88 (PQADFDKAAG…AHELIEKYGL (86 aa)) folds into the ACB domain. An acyl-CoA is bound by residues lysine 15, 30–34 (YGLYK), lysine 52, lysine 56, and tyrosine 75.

This sequence belongs to the ACBP family. As to expression, brain. Is selectively expressed in glial cells.

It is found in the endoplasmic reticulum. The protein localises to the golgi apparatus. Its function is as follows. May play important functions in the control of brain and pituitary activities. May regulate GABA neurotransmission through a paracrine and/or autocrine mechanism. May not bind acyl-CoA esters. The sequence is that of Acyl-CoA-binding protein homolog from Pelophylax ridibundus (Marsh frog).